Reading from the N-terminus, the 380-residue chain is Erythronate-4-phosphate dehydrogenase (380 aa).

The substrate site is built by Ser-45 and Thr-66. The cysteines at positions 65 and 90 are disulfide-linked. Residues 126–127 (QV), Asp-146, Thr-175, 206–208 (ASR), and Asp-232 contribute to the NAD(+) site. Arg-208 is an active-site residue. The active site involves Glu-237. Catalysis depends on His-254, which acts as the Proton donor. Gly-257 serves as a coordination point for NAD(+). A substrate-binding site is contributed by Tyr-258.

Belongs to the D-isomer specific 2-hydroxyacid dehydrogenase family. PdxB subfamily. Homodimer.

It localises to the cytoplasm. It catalyses the reaction 4-phospho-D-erythronate + NAD(+) = (R)-3-hydroxy-2-oxo-4-phosphooxybutanoate + NADH + H(+). The protein operates within cofactor biosynthesis; pyridoxine 5'-phosphate biosynthesis; pyridoxine 5'-phosphate from D-erythrose 4-phosphate: step 2/5. In terms of biological role, catalyzes the oxidation of erythronate-4-phosphate to 3-hydroxy-2-oxo-4-phosphonooxybutanoate. In Pseudomonas aeruginosa (strain ATCC 15692 / DSM 22644 / CIP 104116 / JCM 14847 / LMG 12228 / 1C / PRS 101 / PAO1), this protein is Erythronate-4-phosphate dehydrogenase.